A 256-amino-acid chain; its full sequence is Ribosomal RNA large subunit methyltransferase E (256 aa).

S-adenosyl-L-methionine-binding residues include Gly48, Trp50, Asp68, Asp86, and Asp111. The active-site Proton acceptor is the Lys151. The region spanning Pro198 to Glu256 is the TRAM domain.

The protein belongs to the class I-like SAM-binding methyltransferase superfamily. RNA methyltransferase RlmE family.

The protein resides in the cytoplasm. It carries out the reaction uridine(2552) in 23S rRNA + S-adenosyl-L-methionine = 2'-O-methyluridine(2552) in 23S rRNA + S-adenosyl-L-homocysteine + H(+). Specifically methylates the uridine in position 2552 of 23S rRNA at the 2'-O position of the ribose in the fully assembled 50S ribosomal subunit. The chain is Ribosomal RNA large subunit methyltransferase E from Haloquadratum walsbyi (strain DSM 16790 / HBSQ001).